Here is a 494-residue protein sequence, read N- to C-terminus: UPF0371 protein SpyM3_1021 (494 aa).

This sequence belongs to the UPF0371 family.

The chain is UPF0371 protein SpyM3_1021 from Streptococcus pyogenes serotype M3 (strain ATCC BAA-595 / MGAS315).